Consider the following 40-residue polypeptide: Submaxillary gland androgen-regulated protein 2, isoform epsilon (40 aa).

The first 20 residues, 1–20 (MKALYMVFVLWVLIGCFLRC), serve as a signal peptide directing secretion.

The protein localises to the secreted. Functionally, may play a role in protection or detoxification. The polypeptide is Submaxillary gland androgen-regulated protein 2, isoform epsilon (Smr2) (Mus musculus (Mouse)).